The primary structure comprises 501 residues: Solute carrier family 2, facilitated glucose transporter member 5 (501 aa).

Methionine 1 is modified (N-acetylmethionine). At 1–18 the chain is on the cytoplasmic side; that stretch reads MEPQDPVKREGRLTPVIV. A helical membrane pass occupies residues 19–39; it reads LATLIAAFGSSFQYGYNVAAI. Tyrosine 32 contributes to the D-fructose binding site. Topologically, residues 40-68 are extracellular; sequence NSPSEFMKDFYNYTYYDRVGEYMNEFYLT. Asparagine 51 carries N-linked (GlcNAc...) asparagine glycosylation. The chain crosses the membrane as a helical span at residues 69–91; it reads LLWSVTVSMFPFGGFLGSLMVGP. Topologically, residues 92 to 98 are cytoplasmic; it reads LVNNLGR. The chain crosses the membrane as a helical span at residues 99–119; the sequence is KGTLLFNNIFSIVPALLMGFS. The Extracellular portion of the chain corresponds to 120–126; sequence ELAKSFE. Residues 127–149 form a helical membrane-spanning segment; sequence MIIVARVLVGICAGLSSNVVPMY. The Cytoplasmic portion of the chain corresponds to 150–161; it reads LGELAPKNWRGA. Residues 162–182 traverse the membrane as a helical segment; it reads LGVVPQLFITIGILVAQIFGL. Glutamine 167 is a D-fructose binding site. Topologically, residues 183-192 are extracellular; it reads RSLLANEEGW. Residues 193–213 traverse the membrane as a helical segment; sequence PILLGLTGIPAVLQLLFLPFF. Over 214–277 the chain is Cytoplasmic; sequence PESPRYLLIQ…LFKMRSLRWQ (64 aa). A helical membrane pass occupies residues 278–298; that stretch reads VISIIVLMAGQQLSGVNAIYY. Residues glutamine 288 and 296–298 each bind D-fructose; that span reads IYY. At 299-313 the chain is on the extracellular side; that stretch reads YADQIYLSAGVNEDD. Residues 314–334 form a helical membrane-spanning segment; it reads VQYVTAGTGAVNVLITVCAIF. Residues 335–342 are Cytoplasmic-facing; sequence VVELMGRR. The helical transmembrane segment at 343 to 363 threads the bilayer; that stretch reads FLLLLGFSVCFTACCVLTGAL. Residues 364 to 371 are Extracellular-facing; sequence ALQDVISW. The helical transmembrane segment at 372 to 394 threads the bilayer; it reads MPYVSIACVISYVIGHALGPSPI. Histidine 387 contacts D-fructose. At 395–412 the chain is on the cytoplasmic side; that stretch reads PALLVTEIFLQSSRPAAY. A helical transmembrane segment spans residues 413-433; the sequence is MVAGTVHWLSNFTVGLVFPFI. A D-fructose-binding site is contributed by 419 to 420; that stretch reads HW. The Extracellular segment spans residues 434-439; sequence QVGLGA. The chain crosses the membrane as a helical span at residues 440–460; the sequence is YSFVIFAVICLLTTVYIFLII. The Cytoplasmic portion of the chain corresponds to 461–501; sequence PETKSKTFIEINRIFIKMNKVPGVHPEKEELKEFPPSTARQ.

The protein belongs to the major facilitator superfamily. Sugar transporter (TC 2.A.1.1) family. Glucose transporter subfamily.

It is found in the apical cell membrane. Its subcellular location is the cell membrane. The protein resides in the sarcolemma. The catalysed reaction is D-fructose(out) = D-fructose(in). Functions as a fructose transporter that has only low activity with other monosaccharides. Can mediate the uptake of deoxyglucose, but with low efficiency. Essential for fructose uptake in the small intestine. Plays a role in the regulation of salt uptake and blood pressure in response to dietary fructose. Required for the development of high blood pressure in response to high dietary fructose intake. This chain is Solute carrier family 2, facilitated glucose transporter member 5, found in Bos taurus (Bovine).